Here is a 603-residue protein sequence, read N- to C-terminus: Elongation factor 4 (603 aa).

A tr-type G domain is found at Asp7 to Lys191. GTP is bound by residues Asp19–Thr24 and Asn138–Asp141.

It belongs to the TRAFAC class translation factor GTPase superfamily. Classic translation factor GTPase family. LepA subfamily.

The protein localises to the cell inner membrane. It carries out the reaction GTP + H2O = GDP + phosphate + H(+). Functionally, required for accurate and efficient protein synthesis under certain stress conditions. May act as a fidelity factor of the translation reaction, by catalyzing a one-codon backward translocation of tRNAs on improperly translocated ribosomes. Back-translocation proceeds from a post-translocation (POST) complex to a pre-translocation (PRE) complex, thus giving elongation factor G a second chance to translocate the tRNAs correctly. Binds to ribosomes in a GTP-dependent manner. The polypeptide is Elongation factor 4 (Rhodopseudomonas palustris (strain BisA53)).